Consider the following 320-residue polypeptide: Glycerol-3-phosphate dehydrogenase [NAD(P)+] (320 aa).

Residues S14, F15, R35, and K109 each contribute to the NADPH site. 2 residues coordinate sn-glycerol 3-phosphate: K109 and G137. A141 contributes to the NADPH binding site. Sn-glycerol 3-phosphate-binding residues include K192, D248, S258, R259, and N260. K192 acts as the Proton acceptor in catalysis. R259 contributes to the NADPH binding site. NADPH-binding residues include L283 and E285.

It belongs to the NAD-dependent glycerol-3-phosphate dehydrogenase family.

Its subcellular location is the cytoplasm. The catalysed reaction is sn-glycerol 3-phosphate + NAD(+) = dihydroxyacetone phosphate + NADH + H(+). The enzyme catalyses sn-glycerol 3-phosphate + NADP(+) = dihydroxyacetone phosphate + NADPH + H(+). The protein operates within membrane lipid metabolism; glycerophospholipid metabolism. Functionally, catalyzes the reduction of the glycolytic intermediate dihydroxyacetone phosphate (DHAP) to sn-glycerol 3-phosphate (G3P), the key precursor for phospholipid synthesis. The protein is Glycerol-3-phosphate dehydrogenase [NAD(P)+] of Rickettsia typhi (strain ATCC VR-144 / Wilmington).